An 877-amino-acid chain; its full sequence is MQDKYSPSDVEQQAQQHWQALDAYRVTEHARAADGSDKPKFYACSMLPYPSGKLHMGHVRNYTINDVMTRQLRMKGYNVLMPMGWDAFGMPAENAALNNGVAPAAWTYDNIAYMKKQMQSMGLAIDWSREVATCSPDYYRWNQWLFLKMLEKGIAYRKTGTVNWDPVDQTVLANEQVIDGRGWRSGAVVEKREIPMYYLGITKYAQELLSDLDPLGWPERVKLMQQNWIGKSEGVRFAFPHNISGDDGKLINDGKLYVFTTRADTIMGVTFCAVAAEHPIATHAAQSNPALAAFIEECKHGSVMEADMATMEKKGMPTGLTVTHPLTGESVPVWVGNYVLMTYGDGAVMGVPAHDERDFAFANKYHLPIKQVIDVKGQSYDTTTWADWYGDKEHGVLFHSGKYDGLNYQQAVDAVAADLAAQGLGEKKTTWRLRDWGISRQRYWGTPIPLIHCESCGVVPVPEQDLPVRLPEDLVPDGTGNPLAKDPRFLNCTCPSCGKPARRETDTMDTFIDSCWYYMRYTCPDGETMVDARNDYWMPMDQYIGGIEHAILHLLYARFWTKVMRDLGLVKFDEPFTNLLTQGMVLNETYYREDASGKKQWINPADVDVQTDERGRPVGATLKADGQPVVIGGVEKMSKSKNNGIDPQALIDQYGADTARLFTMFAAPPEQQLEWNDAGVEGASRFLRRLWNFGVVHGDAIRGGHGNGVVAGATDADRALRRELYTVLKQANYDYERLQYNTVVSATMKMLNALEGAKDAGADARREGLGLLLRVLYPVVPHITHVLWTELGYAGAYGDLLDAPWPQVDEGALVQSEIELVLQVNGKVRGSIVVPADADRAAIEAIAAKDEAVQKFAEGKPPKKIIVVPGRLVNVVA.

The 'HIGH' region signature appears at 48–58; that stretch reads PYPSGKLHMGH. Positions 636–640 match the 'KMSKS' region motif; sequence KMSKS. An ATP-binding site is contributed by K639.

This sequence belongs to the class-I aminoacyl-tRNA synthetase family.

The protein localises to the cytoplasm. It carries out the reaction tRNA(Leu) + L-leucine + ATP = L-leucyl-tRNA(Leu) + AMP + diphosphate. This Ralstonia pickettii (strain 12J) protein is Leucine--tRNA ligase.